Here is a 332-residue protein sequence, read N- to C-terminus: F-box/SPRY domain-containing protein 1 (332 aa).

Positions 1-10 (MTENNEETIV) are enriched in acidic residues. The tract at residues 1–81 (MTENNEETIV…RRSPRRPEVS (81 aa)) is disordered. Residues 15–24 (CNLTSSTPMK) are compositionally biased toward polar residues. Residues 79–127 (EVSASRLPLKVLNQIFQYLSLKDLRSAMLTCHSWNNALSMEDSDIWQQL) enclose the F-box domain. The 193-residue stretch at 138 to 330 (SDPFLFVELR…VTMVYVGSPQ (193 aa)) folds into the B30.2/SPRY domain.

This sequence belongs to the FBXO45/Fsn family. As to quaternary structure, component of an SCF (SKP1-CUL1-F-box protein) E3 ubiquitin ligase complex composed of cul-1, fsn-1, rpm-1 and skr-1. Interacts (via SPRY domain) with scd-2 (via cytoplasmic domain). Interacts (via SPRY domain) with convertase egl-3 (via C-terminus).

It localises to the synapse. Its pathway is protein modification; protein ubiquitination. Its function is as follows. Component of a SCF (SKP1-CUL1-F-box protein) E3 ubiquitin ligase complex which is required for the restriction and/or maturation of synapses in GABAergic neuromuscular junction (NMJ) presynaptic neurons. Promotes NRJ synapse development and synaptic transmission by negatively regulating the daf-2/InsR pathway in muscles. By targeting convertase egl-3 for degradation, negatively modulates insulin-like protein ins-4 and ins-6 processing. May stabilize synapse formation by promoting the down-regulation of scd-2. Regulates axon termination in PLM and ALM neurons. The polypeptide is F-box/SPRY domain-containing protein 1 (fsn-1) (Caenorhabditis briggsae).